Consider the following 257-residue polypeptide: Phosphate import ATP-binding protein PstB (257 aa).

An ABC transporter domain is found at 5–246 (LEIKDLTAFY…EVIFTSPKNE (242 aa)). Position 37–44 (37–44 (GPSGCGKS)) interacts with ATP.

The protein belongs to the ABC transporter superfamily. Phosphate importer (TC 3.A.1.7) family. The complex is composed of two ATP-binding proteins (PstB), two transmembrane proteins (PstC and PstA) and a solute-binding protein (PstS).

It is found in the cell membrane. The enzyme catalyses phosphate(out) + ATP + H2O = ADP + 2 phosphate(in) + H(+). Part of the ABC transporter complex PstSACB involved in phosphate import. Responsible for energy coupling to the transport system. The chain is Phosphate import ATP-binding protein PstB from Tropheryma whipplei (strain TW08/27) (Whipple's bacillus).